Consider the following 558-residue polypeptide: 2-isopropylmalate synthase (558 aa).

The Pyruvate carboxyltransferase domain occupies 31 to 306 (PIWCAVDLRD…DPGIDFSNID (276 aa)). Mg(2+)-binding residues include Asp40, His245, His247, and Asn281. The segment at 440–558 (AGSPYSFLEH…LCAANHLSDK (119 aa)) is regulatory domain.

The protein belongs to the alpha-IPM synthase/homocitrate synthase family. LeuA type 2 subfamily. As to quaternary structure, homodimer. The cofactor is Mg(2+).

It localises to the cytoplasm. It catalyses the reaction 3-methyl-2-oxobutanoate + acetyl-CoA + H2O = (2S)-2-isopropylmalate + CoA + H(+). The protein operates within amino-acid biosynthesis; L-leucine biosynthesis; L-leucine from 3-methyl-2-oxobutanoate: step 1/4. Its function is as follows. Catalyzes the condensation of the acetyl group of acetyl-CoA with 3-methyl-2-oxobutanoate (2-ketoisovalerate) to form 3-carboxy-3-hydroxy-4-methylpentanoate (2-isopropylmalate). The polypeptide is 2-isopropylmalate synthase (Rhodospirillum rubrum (strain ATCC 11170 / ATH 1.1.1 / DSM 467 / LMG 4362 / NCIMB 8255 / S1)).